We begin with the raw amino-acid sequence, 510 residues long: Lysine--tRNA ligase (510 aa).

Residues Glu-420 and Glu-427 each contribute to the Mg(2+) site.

The protein belongs to the class-II aminoacyl-tRNA synthetase family. Homodimer. The cofactor is Mg(2+).

It is found in the cytoplasm. It carries out the reaction tRNA(Lys) + L-lysine + ATP = L-lysyl-tRNA(Lys) + AMP + diphosphate. The chain is Lysine--tRNA ligase from Ralstonia nicotianae (strain ATCC BAA-1114 / GMI1000) (Ralstonia solanacearum).